Reading from the N-terminus, the 138-residue chain is ATP synthase epsilon chain (138 aa).

This sequence belongs to the ATPase epsilon chain family. In terms of assembly, F-type ATPases have 2 components, CF(1) - the catalytic core - and CF(0) - the membrane proton channel. CF(1) has five subunits: alpha(3), beta(3), gamma(1), delta(1), epsilon(1). CF(0) has three main subunits: a, b and c.

It localises to the cell inner membrane. Produces ATP from ADP in the presence of a proton gradient across the membrane. The protein is ATP synthase epsilon chain of Bartonella quintana (strain Toulouse) (Rochalimaea quintana).